The chain runs to 173 residues: RNA pyrophosphohydrolase (173 aa).

Residues G6–Q149 form the Nudix hydrolase domain. Positions G38–G59 match the Nudix box motif.

Belongs to the Nudix hydrolase family. RppH subfamily. A divalent metal cation serves as cofactor.

Functionally, accelerates the degradation of transcripts by removing pyrophosphate from the 5'-end of triphosphorylated RNA, leading to a more labile monophosphorylated state that can stimulate subsequent ribonuclease cleavage. This is RNA pyrophosphohydrolase from Psychrobacter cryohalolentis (strain ATCC BAA-1226 / DSM 17306 / VKM B-2378 / K5).